A 629-amino-acid chain; its full sequence is Pescadillo homolog (629 aa).

Residues 321-414 (RLRTLFKGLK…QLLPTNKYFI (94 aa)) enclose the BRCT domain. Disordered regions lie at residues 439–470 (KALL…ETVD), 488–568 (EYKK…MVKP), and 598–629 (IEAS…KLGK). Residues Ser453 and Ser457 each carry the phosphoserine modification. 2 stretches are compositionally biased toward acidic residues: residues 454–470 (DEDS…ETVD) and 498–523 (VNED…EELD). Basic and acidic residues predominate over residues 524–535 (EKSKRLQEEKQK). The segment covering 542-551 (KVHKVNKRQV) has biased composition (basic residues). Composition is skewed to basic and acidic residues over residues 552–561 (HKAEVDEHRL) and 598–617 (IEAS…RKEA). The stretch at 584–627 (KEKEEWLLRKKRRTIEASEKEARKTAKREARKEAAAAAAKASKL) forms a coiled coil. Residues 618–629 (AAAAAKASKLGK) show a composition bias toward low complexity.

Belongs to the pescadillo family.

It localises to the nucleus. It is found in the nucleolus. The protein localises to the nucleoplasm. Required for maturation of ribosomal RNAs and formation of the large ribosomal subunit. This Drosophila erecta (Fruit fly) protein is Pescadillo homolog.